Reading from the N-terminus, the 260-residue chain is Protein FAM220A (260 aa).

Disordered stretches follow at residues 1–75 (MKAG…SKAS) and 129–158 (GSDW…GRPG). Residues 35–47 (RNPSPSVVPSWTD) show a composition bias toward polar residues.

As to quaternary structure, interacts with transcriptional activator STAT3; the interaction occurs in both the nucleus and the cytoplasm, is enhanced by IL6 and promotes STAT3 dephosphorylation, leading to negative regulation of STAT3 transcriptional activator activity. Can interact with both unphosphorylated and phosphorylated STAT3 but interacts preferentially with phosphorylated STAT3 in the nucleus. Interacts with protein phosphatase PTPN2/TC45; this promotes interaction of PTPN2 with STAT3, leading to dephosphorylation of STAT3 by PTPN2. As to expression, expressed at high levels in the testis where it is detected within elongated spermatids during the late stages (steps 9-16) of haploid germ cell development and in the tubular lumen (at protein level).

The protein localises to the nucleus. It is found in the cytoplasm. Its subcellular location is the cytoplasmic vesicle. The protein resides in the secretory vesicle. It localises to the acrosome. Promotes dephosphorylation of transcriptional activator STAT3 by interacting with both STAT3 and protein phosphatase PTPN2. This promotes interaction of PTPN2 with STAT3 and mediates STAT3 dephosphorylation by PTPN2, leading to negative regulation of STAT3 transcriptional activator activity. May be required for spermiogenesis or sperm function. The polypeptide is Protein FAM220A (Mus musculus (Mouse)).